A 324-amino-acid chain; its full sequence is N-acetylmuramoyl-L-alanine amidase sle1 (324 aa).

An N-terminal signal peptide occupies residues 1–25 (MQKKYITAIIGTTALSALASTHAQA). LysM domains are found at residues 27 to 70 (TTHT…VLKV), 84 to 127 (TVYT…KLKV), and 147 to 190 (ATYT…KLKV). A Peptidase C51 domain is found at 200–324 (SNNTRSNGGY…YQVRNYKFIH (125 aa)).

It localises to the secreted. The protein resides in the cell surface. It catalyses the reaction Hydrolyzes the link between N-acetylmuramoyl residues and L-amino acid residues in certain cell-wall glycopeptides.. In terms of biological role, peptidoglycan hydrolase involved in the splitting of the septum during cell division. The protein is N-acetylmuramoyl-L-alanine amidase sle1 (sle1) of Staphylococcus epidermidis (strain ATCC 12228 / FDA PCI 1200).